The sequence spans 341 residues: Cyclin-Y (341 aa).

Glycine 2 carries the N-myristoyl glycine lipid modification. Phosphoserine is present on residues serine 21 and serine 25. Threonine 30 carries the post-translational modification Phosphothreonine. Serine 33 is modified (phosphoserine). A Phosphothreonine modification is found at threonine 37. Phosphothreonine; by CDK14 is present on threonine 67. Phosphoserine; by CDK14 occurs at positions 71 and 73. A Phosphothreonine modification is found at threonine 75. Position 83 is a phosphoserine; by CDK14 (serine 83). Residues serine 99, serine 100, and serine 102 each carry the phosphoserine modification. Residues 143–265 (DIFDENLHPL…FLELLQFNIN (123 aa)) enclose the Cyclin N-terminal domain. Serine 280 carries the post-translational modification Phosphoserine. Residues serine 288 and serine 295 each carry the phosphoserine; by CDK14 modification. Phosphoserine is present on residues serine 324 and serine 326. Residue threonine 331 is modified to Phosphothreonine.

It belongs to the cyclin family. Cyclin Y subfamily. In terms of assembly, found in a complex with CAPRIN2, LRP6 and CDK14 during G2/M stage; CAPRIN2 functions as a scaffold for the complex by binding to CCNY via its N terminus and to CDK14 via its C terminus. Interacts with CDK14. Interacts with CDK16. Interacts with LRP6. In terms of processing, ubiquitinated; leading to its degradation. Post-translationally, heavily phosphorylated. Phosphorylation at Ser-71 and Ser-73 by CDK14 is enhanced during the G2 and M cell cycle phases, and creates a phosphodegron triggering SCF-dependent ubiquitination. As to expression, widely expressed.

It localises to the cell membrane. Its subcellular location is the nucleus. Its function is as follows. Positive regulatory subunit of the cyclin-dependent kinases CDK14/PFTK1 and CDK16. Acts as a cell-cycle regulator of Wnt signaling pathway during G2/M phase by recruiting CDK14/PFTK1 to the plasma membrane and promoting phosphorylation of LRP6, leading to the activation of the Wnt signaling pathway. Recruits CDK16 to the plasma membrane. Isoform 3 might play a role in the activation of MYC-mediated transcription. This is Cyclin-Y (CCNY) from Homo sapiens (Human).